Reading from the N-terminus, the 458-residue chain is NADH-quinone oxidoreductase subunit N 1 (458 aa).

Transmembrane regions (helical) follow at residues 12–32 (ALIP…AGLL), 37–57 (EVLV…IPSF), 70–90 (FLTI…LLVL), 101–121 (FNES…LVSA), 124–144 (LISF…LVGI), 159–179 (FMLG…IYGA), 199–219 (ILIG…LVPF), 230–250 (APTP…LGAF), 266–286 (SNFL…FALI), 293–313 (MLAY…IVGT), 321–341 (VAYM…VIAF), 361–381 (IAML…GFIV), 393–413 (GFTW…YYYL), and 438–458 (VAIL…LFLI).

It belongs to the complex I subunit 2 family. In terms of assembly, NDH-1 is composed of 14 different subunits. Subunits NuoA, H, J, K, L, M, N constitute the membrane sector of the complex.

It localises to the cell inner membrane. The enzyme catalyses a quinone + NADH + 5 H(+)(in) = a quinol + NAD(+) + 4 H(+)(out). Functionally, NDH-1 shuttles electrons from NADH, via FMN and iron-sulfur (Fe-S) centers, to quinones in the respiratory chain. The immediate electron acceptor for the enzyme in this species is believed to be ubiquinone. Couples the redox reaction to proton translocation (for every two electrons transferred, four hydrogen ions are translocated across the cytoplasmic membrane), and thus conserves the redox energy in a proton gradient. The sequence is that of NADH-quinone oxidoreductase subunit N 1 from Thermodesulfovibrio yellowstonii (strain ATCC 51303 / DSM 11347 / YP87).